The primary structure comprises 191 residues: UPF0312 protein Shewmr4_1178 (191 aa).

Residues 1–22 form the signal peptide; it reads MKKQLLAALIGGSLLAPMAASA.

It belongs to the UPF0312 family. Type 1 subfamily.

Its subcellular location is the periplasm. In Shewanella sp. (strain MR-4), this protein is UPF0312 protein Shewmr4_1178.